The chain runs to 79 residues: Small ribosomal subunit protein bS18 (79 aa).

In terms of assembly, part of the 30S ribosomal subunit. Forms a tight heterodimer with protein bS6. Both N-terminus methionine truncation and retention have been observed for this protein. In terms of processing, may be methylated up to 6 times, on undetermined residues.

Its function is as follows. Binds as a heterodimer with protein bS6 to the central domain of the 16S rRNA, where it helps stabilize the platform of the 30S subunit. The protein is Small ribosomal subunit protein bS18 of Rhodopseudomonas palustris (strain ATCC BAA-98 / CGA009).